The following is a 493-amino-acid chain: Angiopoietin-related protein 2 (493 aa).

An N-terminal signal peptide occupies residues 1 to 19 (MRPLCMTYWWLGLLATVGA). Coiled-coil stretches lie at residues 77–115 (EVHL…VDGG) and 152–202 (ALEL…QLEE). Asn164 and Asn192 each carry an N-linked (GlcNAc...) asparagine glycan. A Fibrinogen C-terminal domain is found at 269–489 (DKPSGPWRDC…KVVMMIRPNP (221 aa)). 2 cysteine pairs are disulfide-bonded: Cys278/Cys307 and Cys430/Cys443.

In terms of tissue distribution, widely expressed in heart, tongue, lung and skeletal muscle. Also found in lower levels in kidney, epididymis and testis.

It is found in the secreted. Induces sprouting in endothelial cells through an autocrine and paracrine action. The sequence is that of Angiopoietin-related protein 2 (Angptl2) from Mus musculus (Mouse).